The chain runs to 146 residues: uncharacterized protein (146 aa).

This is an uncharacterized protein from Acanthamoeba polyphaga mimivirus (APMV).